A 940-amino-acid polypeptide reads, in one-letter code: Valine--tRNA ligase (940 aa).

Positions 47 to 57 (PNVTGILHMGH) match the 'HIGH' region motif. The short motif at 564–568 (KLSKS) is the 'KMSKS' region element. Residue lysine 567 participates in ATP binding. Residues 873–937 (VEHIAKEKTR…ELQSILDKLA (65 aa)) are a coiled coil.

Belongs to the class-I aminoacyl-tRNA synthetase family. ValS type 1 subfamily. Monomer.

The protein resides in the cytoplasm. It carries out the reaction tRNA(Val) + L-valine + ATP = L-valyl-tRNA(Val) + AMP + diphosphate. Catalyzes the attachment of valine to tRNA(Val). As ValRS can inadvertently accommodate and process structurally similar amino acids such as threonine, to avoid such errors, it has a 'posttransfer' editing activity that hydrolyzes mischarged Thr-tRNA(Val) in a tRNA-dependent manner. This is Valine--tRNA ligase from Chlamydia abortus (strain DSM 27085 / S26/3) (Chlamydophila abortus).